Here is a 228-residue protein sequence, read N- to C-terminus: Elongation factor 1-beta (228 aa).

The segment at 74–116 (ASKAFTAYGPEGSEASANPKDKPAEEEEEEDLFASDSEDEDPA) is disordered. The tract at residues 84 to 93 (EGSEASANPK) is igE-binding. Over residues 97–115 (AEEEEEEDLFASDSEDEDP) the composition is skewed to acidic residues.

Belongs to the EF-1-beta/EF-1-delta family. In terms of assembly, EF-1 is composed of 4 subunits: alpha, beta, delta, and gamma.

Its function is as follows. EF-1-beta and EF-1-delta stimulate the exchange of GDP bound to EF-1-alpha to GTP. In Penicillium citrinum, this protein is Elongation factor 1-beta.